The following is an 87-amino-acid chain: Defensin-like protein 218 (87 aa).

Residues 1 to 19 (MKTIVCFLTILILVSSCES) form the signal peptide. 3 disulfides stabilise this stretch: Cys-51-Cys-70, Cys-54-Cys-75, and Cys-58-Cys-77.

It belongs to the DEFL family.

It localises to the secreted. The protein is Defensin-like protein 218 of Arabidopsis thaliana (Mouse-ear cress).